The following is a 147-amino-acid chain: Protein OPG060 (147 aa).

This sequence belongs to the orthopoxvirus OPG058 family.

This Bos taurus (Bovine) protein is Protein OPG060 (OPG060).